A 138-amino-acid chain; its full sequence is Histone H2B (138 aa).

Residues 1–10 (MPPKAAEKKP) show a composition bias toward basic and acidic residues. Residues 1–47 (MPPKAAEKKPSTAGKAPAGKAPEKKEAGKKTTAAGGEKKKRSKTRKE) are disordered. Lys-8 and Lys-9 each carry N6-acetyllysine; alternate. Glycyl lysine isopeptide (Lys-Gly) (interchain with G-Cter in SUMO); alternate cross-links involve residues Lys-8 and Lys-9. Residues 11–20 (STAGKAPAGK) show a composition bias toward low complexity. Position 15 is an N6-acetyllysine (Lys-15). Lys-24 carries the post-translational modification N6-acetyllysine; alternate. Lys-24 is covalently cross-linked (Glycyl lysine isopeptide (Lys-Gly) (interchain with G-Cter in SUMO); alternate). Lys-25 is covalently cross-linked (Glycyl lysine isopeptide (Lys-Gly) (interchain with G-Cter in SUMO)). Lys-132 participates in a covalent cross-link: Glycyl lysine isopeptide (Lys-Gly) (interchain with G-Cter in ubiquitin).

Belongs to the histone H2B family. In terms of assembly, the nucleosome is a histone octamer containing two molecules each of H2A, H2B, H3 and H4 assembled in one H3-H4 heterotetramer and two H2A-H2B heterodimers. The octamer wraps approximately 147 bp of DNA. Monoubiquitinated to form H2BK123ub1. H2BK123ub1 gives a specific tag for epigenetic transcriptional activation and is also prerequisite for H3K4me and H3K79me formation. H2BK123ub1 also modulates the formation of double-strand breaks during meiosis and is a prerequisite for DNA-damage checkpoint activation. In terms of processing, acetylated by GCN5 to form H2BK11ac and H2BK16ac. H2BK16ac can also be formed by ESA1. Acetylation of N-terminal lysines and particularly formation of H2BK11acK16ac has a positive effect on transcription. Post-translationally, sumoylation to form H2BK6su or H2BK7su, and probably also H2BK16su or H2BK17su, occurs preferentially near the telomeres and represses gene transcription.

Its subcellular location is the nucleus. The protein localises to the chromosome. In terms of biological role, core component of nucleosome. Nucleosomes wrap and compact DNA into chromatin, limiting DNA accessibility to the cellular machineries which require DNA as a template. Histones thereby play a central role in transcription regulation, DNA repair, DNA replication and chromosomal stability. DNA accessibility is regulated via a complex set of post-translational modifications of histones, also called histone code, and nucleosome remodeling. This chain is Histone H2B (HTB1), found in Ajellomyces capsulatus (Darling's disease fungus).